A 230-amino-acid polypeptide reads, in one-letter code: 2,3-bisphosphoglycerate-dependent phosphoglycerate mutase (230 aa).

Residues arginine 8–asparagine 15, threonine 21–glycine 22, arginine 60, glutamate 87–tyrosine 90, lysine 98, arginine 114–arginine 115, and glycine 183–asparagine 184 each bind substrate. Residue histidine 9 is the Tele-phosphohistidine intermediate of the active site. Catalysis depends on glutamate 87, which acts as the Proton donor/acceptor.

It belongs to the phosphoglycerate mutase family. BPG-dependent PGAM subfamily.

The catalysed reaction is (2R)-2-phosphoglycerate = (2R)-3-phosphoglycerate. It participates in carbohydrate degradation; glycolysis; pyruvate from D-glyceraldehyde 3-phosphate: step 3/5. Its function is as follows. Catalyzes the interconversion of 2-phosphoglycerate and 3-phosphoglycerate. The sequence is that of 2,3-bisphosphoglycerate-dependent phosphoglycerate mutase from Lactobacillus acidophilus (strain ATCC 700396 / NCK56 / N2 / NCFM).